The chain runs to 709 residues: Elongation factor G (709 aa).

Residues 6–295 (KFLRNIGIMA…AVCTYLPSPL (290 aa)) form the tr-type G domain. Residues 15-22 (AHIDAGKT), 92-96 (DTPGH), and 146-149 (NKMD) contribute to the GTP site.

It belongs to the TRAFAC class translation factor GTPase superfamily. Classic translation factor GTPase family. EF-G/EF-2 subfamily.

It localises to the cytoplasm. In terms of biological role, catalyzes the GTP-dependent ribosomal translocation step during translation elongation. During this step, the ribosome changes from the pre-translocational (PRE) to the post-translocational (POST) state as the newly formed A-site-bound peptidyl-tRNA and P-site-bound deacylated tRNA move to the P and E sites, respectively. Catalyzes the coordinated movement of the two tRNA molecules, the mRNA and conformational changes in the ribosome. The polypeptide is Elongation factor G (Amoebophilus asiaticus (strain 5a2)).